The sequence spans 116 residues: Large ribosomal subunit protein bL17 (116 aa).

It belongs to the bacterial ribosomal protein bL17 family. In terms of assembly, part of the 50S ribosomal subunit. Contacts protein L32.

The polypeptide is Large ribosomal subunit protein bL17 (Prochlorococcus marinus (strain SARG / CCMP1375 / SS120)).